The chain runs to 243 residues: CD48 antigen (243 aa).

The first 26 residues, 1–26 (MCSRGWDSCLALELLLLPLSLLVTSI), serve as a signal peptide directing secretion. Ig-like C2-type domains are found at residues 29 to 127 (HLVH…KLQV) and 132 to 212 (PKPV…VCLS). N-linked (GlcNAc...) asparagine glycosylation is found at N40, N44, N104, N162, and N189. The cysteines at positions 154 and 196 are disulfide-linked. S220 carries GPI-anchor amidated serine lipidation. Residues 221–243 (FGVEWIASWLVVTVPTILGLLLT) constitute a propeptide, removed in mature form.

Interacts with CD2. Interacts with CD244; this interaction is possible not only on different cells (trans interaction) but also on the same cell (cis interaction). Interacts with LCK. Widely expressed on all hematopoietic cells.

It localises to the cell membrane. The protein localises to the membrane raft. Its subcellular location is the secreted. Functionally, glycosylphosphatidylinositol (GPI)-anchored cell surface glycoprotein that interacts via its N-terminal immunoglobulin domain with cell surface receptors including CD244/2B4 or CD2 to regulate immune cell function and activation. Participates in T-cell signaling transduction by associating with CD2 and efficiently bringing the Src family protein kinase LCK and LAT to the TCR/CD3 complex. In turn, promotes LCK phosphorylation and subsequent activation. Induces the phosphorylation of the cytoplasmic immunoreceptortyrosine switch motifs (ITSMs) of CD244 initiating a series of signaling events that leads to the generation of the immunological synapse and the directed release of cytolytic granules containing perforin and granzymes by T-lymphocytes and NK-cells. The chain is CD48 antigen (CD48) from Homo sapiens (Human).